Consider the following 326-residue polypeptide: Transcription factor WRKY45-1 (326 aa).

2 disordered regions span residues 67-114 (GGEG…SVVV) and 252-288 (GVGSSDQEEVLSSLTPGSSAARGGGGGGGVAGPFGPD). Positions 112-180 (VVVKNLDDGQ…YIGEHTCRDP (69 aa)) form a DNA-binding region, WRKY. Residues 273-283 (RGGGGGGGVAG) show a composition bias toward gly residues.

This sequence belongs to the WRKY group III family. As to expression, expressed in aleurone cells.

The protein localises to the nucleus. In terms of biological role, transcriptional activator involved in defense responses against pathogens. Acts as a positive regulator of defense responses against the rice blast fungus Magnaporthe oryzae. Acts through W-boxes, which are cis-elements that are enriched in the promoters of several defense-related genes. Plays an important role in the benzothiadiazole-induced disease resistance by mediating salicylic acid (SA) defense signaling pathway, independently of the disease resistance gene NPR1/NH1. Acts as a negative regulator of defense responses against the bacterial blight Xanthomonas oryzae pv oryzae (Xoo) and the bacterial streak Xanthomonas oryzae pv oryzicola (Xoc). Acts downstream of abscisic acid (ABA) signaling in response to the rice blast fungus. ABA is a negative regulator of defense responses that interacts antagonistically with salicylic acid (SA) signaling pathway. Acts as a negative regulator of ABA signaling that suppresses growth of seedlings. Does not seem to be involved in the regulation of salt stress response. Acts as a negative regulator of cold stress response. Acts as a negative regulator of drought stress response. This chain is Transcription factor WRKY45-1, found in Oryza sativa subsp. japonica (Rice).